The chain runs to 352 residues: Hematopoietic SH2 domain-containing protein (352 aa).

Residues tryptophan 34 to cysteine 125 enclose the SH2 domain. Disordered stretches follow at residues glutamate 157–threonine 199 and valine 241–cysteine 352. Over residues arginine 180–proline 191 the composition is skewed to polar residues. A compositionally biased stretch (basic and acidic residues) spans proline 283–arginine 295. A compositionally biased stretch (pro residues) spans glutamine 343–cysteine 352.

In terms of assembly, interacts with FES and TNK2. May be phosphorylated by FES and ACK1. Predominantly expressed in spleen and hematopoietic cells such as peripheral blood leukocytes and weakly expressed in prostate, thymus, heart, small intestine and placenta.

The protein localises to the cytoplasm. Its subcellular location is the nucleus. Its function is as follows. May be a modulator of the apoptotic response through its ability to affect mitochondrial stability. Adapter protein involved in tyrosine kinase and CD28 signaling. Seems to affect CD28-mediated activation of the RE/AP element of the interleukin-2 promoter. The chain is Hematopoietic SH2 domain-containing protein (HSH2D) from Homo sapiens (Human).